The chain runs to 373 residues: tRNA-specific 2-thiouridylase MnmA (373 aa).

Residues 7–14 (AMSGGVDS) and L33 contribute to the ATP site. C101 (nucleophile) is an active-site residue. A disulfide bridge connects residues C101 and C215. ATP is bound at residue G125. The tract at residues 165-167 (KDQ) is interaction with tRNA. C215 functions as the Cysteine persulfide intermediate in the catalytic mechanism.

This sequence belongs to the MnmA/TRMU family.

The protein localises to the cytoplasm. It carries out the reaction S-sulfanyl-L-cysteinyl-[protein] + uridine(34) in tRNA + AH2 + ATP = 2-thiouridine(34) in tRNA + L-cysteinyl-[protein] + A + AMP + diphosphate + H(+). Functionally, catalyzes the 2-thiolation of uridine at the wobble position (U34) of tRNA, leading to the formation of s(2)U34. This Roseiflexus sp. (strain RS-1) protein is tRNA-specific 2-thiouridylase MnmA.